Reading from the N-terminus, the 111-residue chain is UPF0145 protein BMA10229_A0446 (111 aa).

The protein belongs to the UPF0145 family.

The polypeptide is UPF0145 protein BMA10229_A0446 (Burkholderia mallei (strain NCTC 10229)).